A 357-amino-acid polypeptide reads, in one-letter code: GTPase Obg (357 aa).

The region spanning 1–159 is the Obg domain; it reads MKFVDEAEIQ…RTLKLELKLL (159 aa). In terms of domain architecture, OBG-type G spans 160 to 343; that stretch reads ADIGMLGFPN…IMKSAMTLFE (184 aa). GTP is bound by residues 166 to 173, 191 to 195, 213 to 216, 293 to 296, and 324 to 326; these read GFPNVGKS, FTTLY, DVPG, NKAD, and SAV. Residues Ser-173 and Thr-193 each contribute to the Mg(2+) site.

Belongs to the TRAFAC class OBG-HflX-like GTPase superfamily. OBG GTPase family. In terms of assembly, monomer. The cofactor is Mg(2+).

The protein resides in the cytoplasm. Its function is as follows. An essential GTPase which binds GTP, GDP and possibly (p)ppGpp with moderate affinity, with high nucleotide exchange rates and a fairly low GTP hydrolysis rate. Plays a role in control of the cell cycle, stress response, ribosome biogenesis and in those bacteria that undergo differentiation, in morphogenesis control. The polypeptide is GTPase Obg (Xylella fastidiosa (strain 9a5c)).